The primary structure comprises 156 residues: Protein-export protein SecB (156 aa).

The protein belongs to the SecB family. In terms of assembly, homotetramer, a dimer of dimers. One homotetramer interacts with 1 SecA dimer.

Its subcellular location is the cytoplasm. In terms of biological role, one of the proteins required for the normal export of preproteins out of the cell cytoplasm. It is a molecular chaperone that binds to a subset of precursor proteins, maintaining them in a translocation-competent state. It also specifically binds to its receptor SecA. The protein is Protein-export protein SecB of Pectobacterium carotovorum subsp. carotovorum (strain PC1).